The following is a 421-amino-acid chain: Uracil permease (421 aa).

12 helical membrane passes run 18–38 (IPLSLQHLFAMFGSTVLVPML), 41–61 (INPAICLLMNGIGTLIYIFLC), 65–85 (IPAYLGSSFAFISPVLIVIST), 89–109 (EAALSGFLVVGLVFCLIGLLV), 115–135 (GWIEIVFPPAAMGAIVAVIGL), 160–180 (PKVIAVSLVTLLTAVVGNVMF), 186–206 (IIPILISIIVGYALAAFLGIV), 232–252 (IAIIVPAALVVVAEHIGHLIV), 304–324 (VYSIWIIGGAAVMAIVLSFVG), 329–349 (LIQTIPVPVMGGVSILLFGVI), 371–391 (ILTAVVLIIGISGAAFKWGNF), and 393–413 (MKGMALATVIAILLGLFFNII).

Belongs to the nucleobase:cation symporter-2 (NCS2) (TC 2.A.40) family.

The protein localises to the cell membrane. Inhibited by the proton gradient disruptor carbonyl cyanide m-chlorophenylhydrazone (CCCP), but not by the sodium gradient disruptor ouabain. Both xanthine and uric acid act as competitive inhibitors of uracil transport. Functionally, specific for the uptake of uracil. Transport is probably proton-dependent. The chain is Uracil permease from Paenibacillus larvae subsp. larvae (strain NRRL B-3650 / LMG 16245).